The chain runs to 225 residues: Phosphoribosylformylglycinamidine synthase subunit PurQ (225 aa).

The Glutamine amidotransferase type-1 domain occupies 5-225 (RFGIVVFPGS…WQSIVQSLAG (221 aa)). The Nucleophile role is filled by cysteine 89. Catalysis depends on residues histidine 198 and glutamate 200.

In terms of assembly, part of the FGAM synthase complex composed of 1 PurL, 1 PurQ and 2 PurS subunits.

It is found in the cytoplasm. The catalysed reaction is N(2)-formyl-N(1)-(5-phospho-beta-D-ribosyl)glycinamide + L-glutamine + ATP + H2O = 2-formamido-N(1)-(5-O-phospho-beta-D-ribosyl)acetamidine + L-glutamate + ADP + phosphate + H(+). It carries out the reaction L-glutamine + H2O = L-glutamate + NH4(+). The protein operates within purine metabolism; IMP biosynthesis via de novo pathway; 5-amino-1-(5-phospho-D-ribosyl)imidazole from N(2)-formyl-N(1)-(5-phospho-D-ribosyl)glycinamide: step 1/2. Part of the phosphoribosylformylglycinamidine synthase complex involved in the purines biosynthetic pathway. Catalyzes the ATP-dependent conversion of formylglycinamide ribonucleotide (FGAR) and glutamine to yield formylglycinamidine ribonucleotide (FGAM) and glutamate. The FGAM synthase complex is composed of three subunits. PurQ produces an ammonia molecule by converting glutamine to glutamate. PurL transfers the ammonia molecule to FGAR to form FGAM in an ATP-dependent manner. PurS interacts with PurQ and PurL and is thought to assist in the transfer of the ammonia molecule from PurQ to PurL. The chain is Phosphoribosylformylglycinamidine synthase subunit PurQ from Synechococcus sp. (strain JA-3-3Ab) (Cyanobacteria bacterium Yellowstone A-Prime).